The chain runs to 146 residues: Probable calcium-binding protein CML32 (146 aa).

4 consecutive EF-hand domains span residues Met1–Ser33, Ile34–Gly69, Asp73–Lys108, and Gln109–Lys144. The Ca(2+) site is built by Asp11, Asn13, Asp15, Lys17, Glu22, Asp47, Asp49, Asp51, Gln53, Glu58, Asp86, Asp88, Asp90, Lys92, Glu97, Asp122, Asp124, Asp126, and Glu133.

Potential calcium sensor. The polypeptide is Probable calcium-binding protein CML32 (CML32) (Arabidopsis thaliana (Mouse-ear cress)).